Reading from the N-terminus, the 344-residue chain is uncharacterized protein (344 aa).

Residues 1–28 (MNKKSLNIVATLGILLVLAFSGCVDQSA) form the signal peptide.

This sequence belongs to the bacterial solute-binding protein 1 family. WtpA subfamily.

This is an uncharacterized protein from Methanococcus maripaludis (strain C7 / ATCC BAA-1331).